Reading from the N-terminus, the 380-residue chain is Zinc metalloproteinase-like protein nas-21 (380 aa).

The signal sequence occupies residues 1–24 (MNYFITFFFMHIAVLNFYFRFSNG). A Peptidase M12A domain is found at 46-234 (QALRMDNEPR…LMINEYYQCS (189 aa)). Asn-87 is a glycosylation site (N-linked (GlcNAc...) asparagine). Cystine bridges form between Cys-90–Cys-233 and Cys-110–Cys-130. Glu-138 is an active-site residue. Asn-253, Asn-269, Asn-283, and Asn-304 each carry an N-linked (GlcNAc...) asparagine glycan.

The protein localises to the secreted. May lack metalloprotease activity. This is Zinc metalloproteinase-like protein nas-21 (nas-21) from Caenorhabditis elegans.